A 319-amino-acid chain; its full sequence is HTH-type transcriptional regulator YidZ (319 aa).

The HTH lysR-type domain maps to 8 to 65 (LDLNLLLCLQLLMQERSVTKAAKRMNVTPSAVSKSLAKLRAWFDDPLFVNTPLGLAPT). Residues 25 to 44 (VTKAAKRMNVTPSAVSKSLA) constitute a DNA-binding region (H-T-H motif).

Belongs to the LysR transcriptional regulatory family.

In terms of biological role, involved in anaerobic NO protection. This is HTH-type transcriptional regulator YidZ from Salmonella heidelberg (strain SL476).